We begin with the raw amino-acid sequence, 92 residues long: Parbolysin P7 (92 aa).

Intrachain disulfides connect cysteine 15/cysteine 36, cysteine 21/cysteine 32, and cysteine 46/cysteine 59.

This sequence belongs to the worm cytolysin family. Localized within the skin and proboscis and are most readily isolated from body mucus secretions.

The protein resides in the secreted. Cytolysin that shows hemolytic activity (on bovine erythrocytes, HC(50)=5.75 mg/ml). This hemolytic activity is completely inhibited by small unilamelar vesicles composed of PC/PG, PC/PI and PC/PS in 1:1 molar ratios (with at least 100 mg/ml concentration). In Parborlasia corrugatus (Antarctic nemertean worm), this protein is Parbolysin P7.